Consider the following 245-residue polypeptide: UDP-N-acetyl-D-mannosaminuronic acid transferase (245 aa).

The protein belongs to the glycosyltransferase 26 family.

The catalysed reaction is UDP-N-acetyl-alpha-D-mannosaminouronate + N-acetyl-alpha-D-glucosaminyl-di-trans,octa-cis-undecaprenyl diphosphate = beta-D-ManNAcA-(1-&gt;4)-alpha-D-GlcNAc-di-trans,octa-cis-undecaprenyl diphosphate + UDP + H(+). The protein operates within bacterial outer membrane biogenesis; enterobacterial common antigen biosynthesis. Functionally, catalyzes the synthesis of Und-PP-GlcNAc-ManNAcA (Lipid II), the second lipid-linked intermediate involved in enterobacterial common antigen (ECA) synthesis. The polypeptide is UDP-N-acetyl-D-mannosaminuronic acid transferase (Photorhabdus laumondii subsp. laumondii (strain DSM 15139 / CIP 105565 / TT01) (Photorhabdus luminescens subsp. laumondii)).